The sequence spans 257 residues: Imidazole glycerol phosphate synthase subunit hisF1 (257 aa).

Active-site residues include aspartate 11 and aspartate 130.

Belongs to the HisA/HisF family. Heterodimer of HisH and HisF.

It localises to the cytoplasm. It catalyses the reaction 5-[(5-phospho-1-deoxy-D-ribulos-1-ylimino)methylamino]-1-(5-phospho-beta-D-ribosyl)imidazole-4-carboxamide + L-glutamine = D-erythro-1-(imidazol-4-yl)glycerol 3-phosphate + 5-amino-1-(5-phospho-beta-D-ribosyl)imidazole-4-carboxamide + L-glutamate + H(+). Its pathway is amino-acid biosynthesis; L-histidine biosynthesis; L-histidine from 5-phospho-alpha-D-ribose 1-diphosphate: step 5/9. Functionally, IGPS catalyzes the conversion of PRFAR and glutamine to IGP, AICAR and glutamate. The HisF subunit catalyzes the cyclization activity that produces IGP and AICAR from PRFAR using the ammonia provided by the HisH subunit. This chain is Imidazole glycerol phosphate synthase subunit hisF1 (hisF1), found in Vibrio vulnificus (strain YJ016).